The chain runs to 204 residues: Urease accessory protein UreG (204 aa).

GTP is bound at residue 11–18; sequence GPVGAGKT.

It belongs to the SIMIBI class G3E GTPase family. UreG subfamily. As to quaternary structure, homodimer. UreD, UreF and UreG form a complex that acts as a GTP-hydrolysis-dependent molecular chaperone, activating the urease apoprotein by helping to assemble the nickel containing metallocenter of UreC. The UreE protein probably delivers the nickel.

The protein resides in the cytoplasm. Facilitates the functional incorporation of the urease nickel metallocenter. This process requires GTP hydrolysis, probably effectuated by UreG. This chain is Urease accessory protein UreG, found in Staphylococcus saprophyticus subsp. saprophyticus (strain ATCC 15305 / DSM 20229 / NCIMB 8711 / NCTC 7292 / S-41).